A 212-amino-acid chain; its full sequence is Pyridoxine/pyridoxamine 5'-phosphate oxidase (212 aa).

Residues 61–66, 76–77, K82, K83, and Q105 each bind FMN; these read RTVLLK and FT. Substrate is bound at residue K66. Substrate is bound by residues Y123, R127, and S131. FMN is bound by residues 140–141 and W185; that span reads QS. 191–193 is a binding site for substrate; that stretch reads RLH. An FMN-binding site is contributed by R195.

Belongs to the pyridoxamine 5'-phosphate oxidase family. In terms of assembly, homodimer. FMN serves as cofactor.

It catalyses the reaction pyridoxamine 5'-phosphate + O2 + H2O = pyridoxal 5'-phosphate + H2O2 + NH4(+). The enzyme catalyses pyridoxine 5'-phosphate + O2 = pyridoxal 5'-phosphate + H2O2. The protein operates within cofactor metabolism; pyridoxal 5'-phosphate salvage; pyridoxal 5'-phosphate from pyridoxamine 5'-phosphate: step 1/1. Its pathway is cofactor metabolism; pyridoxal 5'-phosphate salvage; pyridoxal 5'-phosphate from pyridoxine 5'-phosphate: step 1/1. In terms of biological role, catalyzes the oxidation of either pyridoxine 5'-phosphate (PNP) or pyridoxamine 5'-phosphate (PMP) into pyridoxal 5'-phosphate (PLP). The protein is Pyridoxine/pyridoxamine 5'-phosphate oxidase of Vesicomyosocius okutanii subsp. Calyptogena okutanii (strain HA).